The following is a 135-amino-acid chain: Small ribosomal subunit protein bS18 (135 aa).

The tract at residues 1–65 is disordered; that stretch reads MARPDMGGPK…GDEGGGRRGF (65 aa). Gly residues predominate over residues 9 to 41; that stretch reads PKTGGFGGPRSGGFGGGGGGGGGFGGGGFGGGR. The span at 42 to 61 shows a compositional bias: basic and acidic residues; sequence GGDRGDRGDRDDRGGDEGGG.

It belongs to the bacterial ribosomal protein bS18 family. In terms of assembly, part of the 30S ribosomal subunit. Forms a tight heterodimer with protein bS6.

In terms of biological role, binds as a heterodimer with protein bS6 to the central domain of the 16S rRNA, where it helps stabilize the platform of the 30S subunit. This is Small ribosomal subunit protein bS18 from Anaeromyxobacter sp. (strain K).